Reading from the N-terminus, the 183-residue chain is Nascent polypeptide-associated complex subunit beta (183 aa).

The 66-residue stretch at 62–127 (GADDKKLQTT…GEEKELTELV (66 aa)) folds into the NAC-A/B domain. A disordered region spans residues 150 to 183 (QNMQKQAGTEGKKDEDEDDIPDLVEGENFESNVE). Over residues 164 to 183 (EDEDDIPDLVEGENFESNVE) the composition is skewed to acidic residues.

Belongs to the NAC-beta family. In terms of assembly, part of the nascent polypeptide-associated complex (NAC), consisting of egd2 and egd1. NAC associates with ribosomes via egd1.

The protein resides in the cytoplasm. The protein localises to the nucleus. Component of the nascent polypeptide-associated complex (NAC), a dynamic component of the ribosomal exit tunnel, protecting the emerging polypeptides from interaction with other cytoplasmic proteins to ensure appropriate nascent protein targeting. The NAC complex also promotes mitochondrial protein import by enhancing productive ribosome interactions with the outer mitochondrial membrane and blocks the inappropriate interaction of ribosomes translating non-secretory nascent polypeptides with translocation sites in the membrane of the endoplasmic reticulum. EGD1 may act as a transcription factor that exert a negative effect on the expression of several genes that are transcribed by RNA polymerase II. This chain is Nascent polypeptide-associated complex subunit beta (egd1), found in Neosartorya fischeri (strain ATCC 1020 / DSM 3700 / CBS 544.65 / FGSC A1164 / JCM 1740 / NRRL 181 / WB 181) (Aspergillus fischerianus).